We begin with the raw amino-acid sequence, 428 residues long: C4-dicarboxylate transport protein (428 aa).

A run of 8 helical transmembrane segments spans residues valine 8–proline 28, leucine 44–methionine 64, leucine 78–isoleucine 98, glycine 148–glycine 168, valine 184–methionine 204, leucine 222–alanine 242, isoleucine 307–methionine 327, and alanine 355–isoleucine 375.

Belongs to the dicarboxylate/amino acid:cation symporter (DAACS) (TC 2.A.23) family.

It is found in the cell inner membrane. In terms of biological role, responsible for the transport of dicarboxylates such as succinate, fumarate, and malate from the periplasm across the membrane. The sequence is that of C4-dicarboxylate transport protein from Burkholderia thailandensis (strain ATCC 700388 / DSM 13276 / CCUG 48851 / CIP 106301 / E264).